The following is a 238-amino-acid chain: IkB-like protein (238 aa).

ANK repeat units follow at residues 47–76, 86–119, 123–152, and 157–186; these read NGSS…YPGE, DGNS…RICL, NGIT…DPTQ, and RGFT…KPLY. A Nuclear localization signal motif is present at residues 80 to 86; the sequence is PHRRDKD. The Nuclear localization signal motif lies at 202-213; the sequence is KKKPKIIITGCK. The PxIxITxC motif; Interaction with host PPP3CA motif lies at 205–212; that stretch reads PKIIITGC. An FLCV motif motif is present at residues 227-230; it reads FLCV.

Belongs to the asfivirus A238L family. In terms of assembly, interacts with host PPIA. Interacts with host PPP3CA/Calcineurin. Interacts with host RELA/p65; interaction of the 32 kDa form with host RELA results in the formation of a stable complex with NF-kappa-B. Interacts with host PPP3R1. Interacts with host EP300; this interaction inhibits the association of host EP300 with host RELA, JUN and NFATC2. Post-translationally, the protein exists in a 28 kDa and a 32 kDa form, probably due to post-translational modifications which are neither phosphorylation, nor sumoylation.

It is found in the host nucleus. The protein localises to the host cytoplasm. Functionally, ikB-like protein that inhibits the binding of NF-kappa-B to DNA, thereby downregulating pro-inflammatory cytokine production. Forms a heterodimer with the NF-kappa-B subunit RELA/p65 and prevents the activation of the NF-kappa-B transcription factor. Inhibits calcineurin function, which is required for the induction of nuclear factor of activated T cells (NFAT)-dependent immune response genes. Prevents the binding of substrates to calcineurin without affecting the phosphatase activity. Does not contain the serine residues that are phosphorylated by host IkB kinase and thus is not degraded following stimulation of the NFkB pathway. In African swine fever virus (isolate Warthog/Namibia/Wart80/1980) (ASFV), this protein is IkB-like protein (A238L).